Reading from the N-terminus, the 129-residue chain is Large ribosomal subunit protein bL12 (129 aa).

Belongs to the bacterial ribosomal protein bL12 family. Homodimer. Part of the ribosomal stalk of the 50S ribosomal subunit. Forms a multimeric L10(L12)X complex, where L10 forms an elongated spine to which 2 to 4 L12 dimers bind in a sequential fashion. Binds GTP-bound translation factors.

Forms part of the ribosomal stalk which helps the ribosome interact with GTP-bound translation factors. Is thus essential for accurate translation. The protein is Large ribosomal subunit protein bL12 of Solidesulfovibrio magneticus (strain ATCC 700980 / DSM 13731 / RS-1) (Desulfovibrio magneticus).